The chain runs to 546 residues: DDB1- and CUL4-associated factor 11 (546 aa).

Low complexity predominate over residues 1 to 19 (MGSRNSSSAGSGSGDPSEG). The interval 1 to 40 (MGSRNSSSAGSGSGDPSEGLPRRGAGLRRSEEEEEEDEDV) is disordered. 2 positions are modified to phosphoserine: L49 and S75. WD repeat units lie at residues 170–210 (SYSQ…RKFK), 216–258 (DVGW…TALD), 263–302 (ERRF…RTLQ), 305–345 (SHED…EDDP), 353–392 (GHQD…SREG), 435–480 (GVLH…KKLT), and 481–520 (NHKA…YFQD). Positions 523–546 (PESEECASAPAPVPQSSTPFSSPQ) are disordered. The segment covering 536–546 (PQSSTPFSSPQ) has biased composition (polar residues).

Interacts with DDB1 and CUL4A.

Its pathway is protein modification; protein ubiquitination. May function as a substrate receptor for CUL4-DDB1 E3 ubiquitin-protein ligase complex. In Homo sapiens (Human), this protein is DDB1- and CUL4-associated factor 11 (DCAF11).